Consider the following 967-residue polypeptide: RNA polymerase-associated protein RapA (967 aa).

The Helicase ATP-binding domain maps to 163–333 (EVGQRHAPRV…FARLRLLDPN (171 aa)). 176–183 (DEVGLGKT) is a binding site for ATP. The DEAH box signature appears at 279–282 (DEAH). One can recognise a Helicase C-terminal domain in the interval 489–677 (RVEWLLNYLT…TCRQQHDSLK (189 aa)).

This sequence belongs to the SNF2/RAD54 helicase family. RapA subfamily. As to quaternary structure, interacts with the RNAP. Has a higher affinity for the core RNAP than for the holoenzyme. Its ATPase activity is stimulated by binding to RNAP.

In terms of biological role, transcription regulator that activates transcription by stimulating RNA polymerase (RNAP) recycling in case of stress conditions such as supercoiled DNA or high salt concentrations. Probably acts by releasing the RNAP, when it is trapped or immobilized on tightly supercoiled DNA. Does not activate transcription on linear DNA. Probably not involved in DNA repair. This chain is RNA polymerase-associated protein RapA, found in Pectobacterium atrosepticum (strain SCRI 1043 / ATCC BAA-672) (Erwinia carotovora subsp. atroseptica).